A 352-amino-acid chain; its full sequence is ER-derived vesicles protein ERV41 (352 aa).

The Cytoplasmic segment spans residues 1-23 (MAGLKTFDAFPKTEEQYKKKSTK). The chain crosses the membrane as a helical span at residues 24 to 44 (GGLTSLLTYLFLLFIAWTEFG). At 45-311 (EYFGGYIDQQ…FLVRLVAICS (267 aa)) the chain is on the lumenal side. Residues 312–332 (FLVYCASWIFTLLDMALITIM) form a helical membrane-spanning segment. Residues 333-352 (GPKWSLRYQPDDKTKGILDR) lie on the Cytoplasmic side of the membrane. An Isoleucine-leucine motif motif is present at residues 349 to 350 (IL).

The protein belongs to the ERGIC family. As to quaternary structure, interacts with ERV46.

It is found in the endoplasmic reticulum membrane. The protein localises to the golgi apparatus membrane. It localises to the cytoplasmic vesicle. The protein resides in the COPII-coated vesicle membrane. Constituent of COPII-coated endoplasmic reticulum-derived transport vesicles. Required for efficient transport of a subset of secretory proteins to the Golgi. The C-terminal Ile-Leu motif is required for exit from the endoplasmic reticulum. Facilitates retrograde transport from the Golgi to the endoplasmic reticulum. The sequence is that of ER-derived vesicles protein ERV41 (ERV41) from Saccharomyces cerevisiae (strain ATCC 204508 / S288c) (Baker's yeast).